Reading from the N-terminus, the 193-residue chain is MLLLLLPLLLAAVLTRTQADPVPRATRLPVEAKDCHIAQFKSLSPKELQAFKKAKGAIEKRLLEKDMRCSSHLISRAWDLKQLQVQERPKALQAEVALTLKVWENINDSALTTILGQPLHTLSHIHSQLQTCTQLQATAEPKPPSRRLSRWLHRLQEAQSKETPGCLEDSVTSNLFQLLLRDLKCVASGDQCV.

The first 19 residues, 1–19 (MLLLLLPLLLAAVLTRTQA), serve as a signal peptide directing secretion. 3 disulfide bridges follow: Cys-35–Cys-132, Cys-69–Cys-166, and Cys-185–Cys-192.

Belongs to the lambda interferon family.

Its subcellular location is the secreted. In terms of biological role, cytokine with antiviral, antitumour and immunomodulatory activities. Plays a critical role in the antiviral host defense, predominantly in the epithelial tissues. Acts as a ligand for the heterodimeric class II cytokine receptor composed of IL10RB and IFNLR1, and receptor engagement leads to the activation of the JAK/STAT signaling pathway resulting in the expression of IFN-stimulated genes (ISG), which mediate the antiviral state. Has a restricted receptor distribution and therefore restricted targets: is primarily active in epithelial cells and this cell type-selective action is because of the epithelial cell-specific expression of its receptor IFNLR1. Seems not to be essential for early virus-activated host defense in vaginal infection, but plays an important role in Toll-like receptor (TLR)-induced antiviral defense. Plays a significant role in the antiviral immune defense in the intestinal epithelium. Exerts an immunomodulatory effect by up-regulating MHC class I antigen expression. This chain is Interferon lambda-3 (Ifnl3), found in Mus musculus (Mouse).